The sequence spans 961 residues: DNA replication licensing factor MCM2 (961 aa).

A compositionally biased stretch (polar residues) spans 1 to 17 (MDDSENNAPSTPGSPGF). Disordered regions lie at residues 1–81 (MDDS…FNDN) and 120–220 (AEAE…EEDE). Residues 39 to 78 (SDDDDDDVVGAEEAEVDPNVLPEDDGVVAAEEEEDGEDLF) show a composition bias toward acidic residues. 2 stretches are compositionally biased toward basic and acidic residues: residues 120-146 (AEAE…LHDQ) and 166-176 (PPREPRTPRSD). Residues 205-220 (QTDDDPYEDEFDEEDE) show a composition bias toward acidic residues. A C4-type zinc finger spans residues 380-406 (CSKCGTVLGPFFQNSYTEVKVGSCPEC). The MCM domain occupies 524–730 (IGERIVKSIA…FTDEMLARFV (207 aa)). 574–581 (GDPGTAKS) lines the ATP pocket. The Arginine finger motif lies at 706–709 (SRFD).

Belongs to the MCM family. In terms of assembly, component of the minichromosome maintenance (MCM) complex, a heterotetramer composed of MCM2, MCM3, MCM4, MCM5, MCM6 and MCM7. Interacts with CSN5. As to expression, widely expressed, with higher expression in developing tissues.

The protein localises to the nucleus. The enzyme catalyses ATP + H2O = ADP + phosphate + H(+). Functionally, probable component of the MCM2-7 complex (MCM complex) that may function as a DNA helicase and which is essential to undergo a single round of replication initiation and elongation per cell cycle in eukaryotic cells. Can complement the fission yeast mcm2 mutant. This chain is DNA replication licensing factor MCM2, found in Oryza sativa subsp. japonica (Rice).